The sequence spans 673 residues: Beta-galactosidase GalA (673 aa).

Arg105 contributes to the substrate binding site. Residue Cys109 participates in Zn(2+) binding. Position 143 (Asn143) interacts with substrate. Glu144 (proton donor) is an active-site residue. 3 residues coordinate Zn(2+): Cys149, Cys151, and Cys154. The Nucleophile role is filled by Glu308. Substrate contacts are provided by residues Trp316 and 356–359 (EKFH).

It belongs to the glycosyl hydrolase 42 family. Homodimer.

The enzyme catalyses Hydrolysis of terminal non-reducing beta-D-galactose residues in beta-D-galactosides.. Inhibited by hydrolysis end products D-galactose and D-glucose. The hydrolysis of o-nitrophenyl-beta-D-galactopyranoside (ONPG) is slightly activated by monovalent ions, Na(+) and K(+). Concentrations of these ions in the range of 1-100 mM exert the stimulating effects. The presence of 1 mM Mn(2+) together with the presence of 10 mM Na(+) slightly stimulates the activity, while presence of 10 mM Mn(2+) inhibits the activity by about 40%. Its function is as follows. Catalyzes the hydrolysis of lactose to its constituent monosaccharides glucose and galactose. Possesses a low level of transgalactosylation activity for the production of galacto-oligosaccharides (GOS) from lactose. This Bacillus licheniformis (strain ATCC 14580 / DSM 13 / JCM 2505 / CCUG 7422 / NBRC 12200 / NCIMB 9375 / NCTC 10341 / NRRL NRS-1264 / Gibson 46) protein is Beta-galactosidase GalA.